A 302-amino-acid chain; its full sequence is Putative beta-glucosidase 17 (302 aa).

Residues 1 to 27 form the signal peptide; sequence MMAVAAATRIAVVVVAALAALAPGARG. A beta-D-glucoside is bound by residues Gln-47, His-149, and 194 to 195; that span reads NE. Glu-195 serves as the catalytic Proton donor. Cys-214 and Cys-221 are disulfide-bonded. N-linked (GlcNAc...) asparagine glycosylation is present at Asn-274.

It belongs to the glycosyl hydrolase 1 family.

The enzyme catalyses Hydrolysis of terminal, non-reducing beta-D-glucosyl residues with release of beta-D-glucose.. The polypeptide is Putative beta-glucosidase 17 (BGLU17) (Oryza sativa subsp. japonica (Rice)).